Consider the following 217-residue polypeptide: Adenylate kinase (217 aa).

10–15 contacts ATP; the sequence is GAGKGT. An NMP region spans residues 30–59; that stretch reads STGDLFRANISQQTELGKLAKSYMNAGNLV. AMP is bound by residues Thr-31, Arg-36, 57 to 59, 85 to 88, and Gln-92; these read NLV and GFPR. The segment at 126–164 is LID; the sequence is GRRVCRNEPKHVFHVTYTPPKKEGVCDVCGGELYQRDDD. ATP-binding positions include Arg-127 and 137-138; that span reads VF. Residues Arg-161 and Arg-172 each coordinate AMP. Residue Gly-200 coordinates ATP.

Belongs to the adenylate kinase family. Monomer.

Its subcellular location is the cytoplasm. It catalyses the reaction AMP + ATP = 2 ADP. It functions in the pathway purine metabolism; AMP biosynthesis via salvage pathway; AMP from ADP: step 1/1. Its function is as follows. Catalyzes the reversible transfer of the terminal phosphate group between ATP and AMP. Plays an important role in cellular energy homeostasis and in adenine nucleotide metabolism. The chain is Adenylate kinase from Streptomyces coelicolor (strain ATCC BAA-471 / A3(2) / M145).